Consider the following 283-residue polypeptide: Probable 3-deoxy-manno-octulosonic acid transferase (283 aa).

It localises to the cytoplasm. It carries out the reaction an alpha-Kdo-(2-&gt;4)-alpha-Kdo-(2-&gt;6)-lipid IVA + CMP-3-deoxy-beta-D-manno-octulosonate = an alpha-Kdo-(2-&gt;4)-alpha-Kdo-(2-&gt;4)-alpha-Kdo-(2-&gt;6)-lipid IVA + CMP + H(+). It catalyses the reaction alpha-Kdo-(2-&gt;4)-alpha-Kdo-(2-&gt;6)-lipid IVA (E. coli) + CMP-3-deoxy-beta-D-manno-octulosonate = alpha-Kdo-(2-&gt;4)-alpha-Kdo-(2-&gt;4)-alpha-Kdo-(2-&gt;6)-lipid IVA + CMP + H(+). The protein operates within bacterial outer membrane biogenesis; LPS core biosynthesis. It participates in bacterial outer membrane biogenesis; LOS core biosynthesis. Functionally, involved in the biosynthesis of the core oligosaccharide region of lipopolysaccharide (LPS). Required for the addition of 3-deoxy-D-manno-oct-2-ulosonic acid III (KdoIII) to the KdoII residue of the inner lipopolysaccharide core. May also play a role in a lipooligosaccharide (LOS) biosynthesis pathway. In Escherichia coli (strain K12), this protein is Probable 3-deoxy-manno-octulosonic acid transferase.